The sequence spans 466 residues: Ribulose bisphosphate carboxylase large chain (466 aa).

Lysine 5 is subject to N6,N6,N6-trimethyllysine. Positions 114 and 164 each coordinate substrate. Catalysis depends on lysine 166, which acts as the Proton acceptor. Position 168 (lysine 168) interacts with substrate. Residues lysine 192, aspartate 194, and glutamate 195 each coordinate Mg(2+). Lysine 192 is subject to N6-carboxylysine. Histidine 285 functions as the Proton acceptor in the catalytic mechanism. Residues arginine 286, histidine 318, and serine 370 each contribute to the substrate site.

The protein belongs to the RuBisCO large chain family. Type I subfamily. Heterohexadecamer of 8 large chains and 8 small chains; disulfide-linked. The disulfide link is formed within the large subunit homodimers. The cofactor is Mg(2+). In terms of processing, the disulfide bond which can form in the large chain dimeric partners within the hexadecamer appears to be associated with oxidative stress and protein turnover.

The protein resides in the plastid. The protein localises to the chloroplast. It carries out the reaction 2 (2R)-3-phosphoglycerate + 2 H(+) = D-ribulose 1,5-bisphosphate + CO2 + H2O. It catalyses the reaction D-ribulose 1,5-bisphosphate + O2 = 2-phosphoglycolate + (2R)-3-phosphoglycerate + 2 H(+). Functionally, ruBisCO catalyzes two reactions: the carboxylation of D-ribulose 1,5-bisphosphate, the primary event in carbon dioxide fixation, as well as the oxidative fragmentation of the pentose substrate in the photorespiration process. Both reactions occur simultaneously and in competition at the same active site. In Cucurbita pepo (Vegetable marrow), this protein is Ribulose bisphosphate carboxylase large chain.